Consider the following 487-residue polypeptide: UDP-N-acetylmuramate--L-alanine ligase (487 aa).

126–132 (GTHGKTT) provides a ligand contact to ATP.

Belongs to the MurCDEF family.

The protein resides in the cytoplasm. It catalyses the reaction UDP-N-acetyl-alpha-D-muramate + L-alanine + ATP = UDP-N-acetyl-alpha-D-muramoyl-L-alanine + ADP + phosphate + H(+). It participates in cell wall biogenesis; peptidoglycan biosynthesis. Cell wall formation. This Psychromonas ingrahamii (strain DSM 17664 / CCUG 51855 / 37) protein is UDP-N-acetylmuramate--L-alanine ligase.